Here is a 390-residue protein sequence, read N- to C-terminus: Chorismate synthase (390 aa).

NADP(+)-binding residues include Arg39 and Arg45. FMN contacts are provided by residues 132 to 134, 253 to 254, Gly298, 313 to 317, and Arg339; these read RSS, NA, and KPIPT.

This sequence belongs to the chorismate synthase family. As to quaternary structure, homotetramer. Requires FMNH2 as cofactor.

The catalysed reaction is 5-O-(1-carboxyvinyl)-3-phosphoshikimate = chorismate + phosphate. It participates in metabolic intermediate biosynthesis; chorismate biosynthesis; chorismate from D-erythrose 4-phosphate and phosphoenolpyruvate: step 7/7. Functionally, catalyzes the anti-1,4-elimination of the C-3 phosphate and the C-6 proR hydrogen from 5-enolpyruvylshikimate-3-phosphate (EPSP) to yield chorismate, which is the branch point compound that serves as the starting substrate for the three terminal pathways of aromatic amino acid biosynthesis. This reaction introduces a second double bond into the aromatic ring system. This is Chorismate synthase from Bacillus licheniformis (strain ATCC 14580 / DSM 13 / JCM 2505 / CCUG 7422 / NBRC 12200 / NCIMB 9375 / NCTC 10341 / NRRL NRS-1264 / Gibson 46).